The primary structure comprises 124 residues: MPTIQQLVRSERRKINKKTKSPALKSCPQRRGVCTRVYTTTPKKPNSALRKVARVRLTSGFEVTAYIPGVGHNIQEHSVVLIRGGRIKDLPGVRYHVVRGTLDAAGVKDRRKSRSKYGTKKPKS.

Disordered stretches follow at residues 1–28 (MPTI…KSCP) and 104–124 (AAGV…KPKS). Basic residues-rich tracts occupy residues 11-20 (ERRKINKKTK) and 109-124 (DRRK…KPKS).

It belongs to the universal ribosomal protein uS12 family. Part of the 30S ribosomal subunit.

It localises to the plastid. Its subcellular location is the chloroplast. In terms of biological role, with S4 and S5 plays an important role in translational accuracy. Located at the interface of the 30S and 50S subunits. This is Small ribosomal subunit protein uS12c (rps12) from Porphyra purpurea (Red seaweed).